The chain runs to 361 residues: Aromatic amino acid aminotransferase (361 aa).

Residue Lys-221 is modified to N6-(pyridoxal phosphate)lysine.

It belongs to the class-II pyridoxal-phosphate-dependent aminotransferase family. Homodimer. It depends on pyridoxal 5'-phosphate as a cofactor.

It carries out the reaction an aromatic L-alpha-amino acid + 2-oxoglutarate = an aromatic oxo-acid + L-glutamate. Functionally, aminotransferase that catalyzes the conversion of aromatic amino acids and 2-oxoglutarate into corresponding aromatic oxo acids and L-glutamate. In Mycobacterium ulcerans (strain Agy99), this protein is Aromatic amino acid aminotransferase.